Reading from the N-terminus, the 649-residue chain is MHVVLPDGKQLELPMGATALDAASAIGPRLAQDALAATANGELVDLMTPLPDGASITLITKKNPGDAAPLFRHSLGHVMSQAVGEYYRAKGYSDDRIKRGVGPSIENGWYQDFDLPEPLREEDLPEIEKIMREILSRNLAFRRREVSKAEGLAQFPHDPYKQELIQGLPDDEPITFYQQGDYVDLCRGPHFPSTGRLPGAFKLMSTSGAYWRGNEKNPILQRVYGVAFASQKELDEYLHQLEEAKRRDHRKLGRELELFTIDPLVGKGLPLWLPNGTVLREELAGFLKEQQFRRGYQGVITPNIGNLELYKTSGHYPYYADGQFNPIEVDDEQYMLKPMNCPHHVRIYASKPRSYRDLPVRLAEFGTVYRYEQSGELNGLTRVRGFTQDDAHLFCRPDQLKKEFLDVLDLTVLVLKTFGMNDVRFRVGTRDPESDKYVGDEANWELAERQILEAVDEVGLPYTIEPGDAAFYGPKLDFVVKDVLGREWQLGTIQVDYNLPERFDISYVGEDGQDHRPIMIHRAPFGSLERFVGILIEHYAGDFPLWLAPRQVMIIPIADRHNEYAEELRSELHAAGLRAEVDDSSNRMQAKVRTAELSKIPVMLIVGDKEQEARQVSVRERSVEGHKERKGVAFDDLCAELLERYRARI.

Positions 1–60 (MHVVLPDGKQLELPMGATALDAASAIGPRLAQDALAATANGELVDLMTPLPDGASITLIT) constitute a TGS domain. Positions 248-544 (DHRKLGRELE…LIEHYAGDFP (297 aa)) are catalytic. Zn(2+)-binding residues include Cys-341, His-392, and His-521.

Belongs to the class-II aminoacyl-tRNA synthetase family. In terms of assembly, homodimer. Requires Zn(2+) as cofactor.

It localises to the cytoplasm. The enzyme catalyses tRNA(Thr) + L-threonine + ATP = L-threonyl-tRNA(Thr) + AMP + diphosphate + H(+). Catalyzes the attachment of threonine to tRNA(Thr) in a two-step reaction: L-threonine is first activated by ATP to form Thr-AMP and then transferred to the acceptor end of tRNA(Thr). Also edits incorrectly charged L-seryl-tRNA(Thr). In Deinococcus deserti (strain DSM 17065 / CIP 109153 / LMG 22923 / VCD115), this protein is Threonine--tRNA ligase.